Here is a 559-residue protein sequence, read N- to C-terminus: Vacuolar protein 8 (559 aa).

Glycine 2 carries the N-myristoyl glycine lipid modification. Residue cysteine 4 is the site of S-palmitoyl cysteine attachment. ARM repeat units follow at residues 77–116, 118–157, 159–198, 200–239, 243–282, 284–323, 325–365, and 409–448; these read TERD…NLAV, TENK…NLAT, EENK…NMTH, DENR…NIAV, NRRK…NLAS, EKYQ…NISI, PMNE…NLAA, and DDLK…NLSS.

The protein belongs to the beta-catenin family.

The protein localises to the vacuole membrane. Functions in both vacuole inheritance and protein targeting from the cytoplasm to vacuole. The chain is Vacuolar protein 8 (VAC8) from Gibberella zeae (strain ATCC MYA-4620 / CBS 123657 / FGSC 9075 / NRRL 31084 / PH-1) (Wheat head blight fungus).